The following is a 334-amino-acid chain: N-acetyl-gamma-glutamyl-phosphate reductase (334 aa).

Residue Cys-154 is part of the active site.

The protein belongs to the NAGSA dehydrogenase family. Type 1 subfamily.

The protein resides in the cytoplasm. It carries out the reaction N-acetyl-L-glutamate 5-semialdehyde + phosphate + NADP(+) = N-acetyl-L-glutamyl 5-phosphate + NADPH + H(+). It participates in amino-acid biosynthesis; L-arginine biosynthesis; N(2)-acetyl-L-ornithine from L-glutamate: step 3/4. Its function is as follows. Catalyzes the NADPH-dependent reduction of N-acetyl-5-glutamyl phosphate to yield N-acetyl-L-glutamate 5-semialdehyde. In Yersinia pestis, this protein is N-acetyl-gamma-glutamyl-phosphate reductase.